We begin with the raw amino-acid sequence, 238 residues long: tRNA (guanine-N(7)-)-methyltransferase (238 aa).

S-adenosyl-L-methionine-binding residues include glutamate 68, glutamate 93, aspartate 120, and aspartate 143. The active site involves aspartate 143. Substrate is bound by residues lysine 147, aspartate 179, and 216 to 219; that span reads TKFE.

It belongs to the class I-like SAM-binding methyltransferase superfamily. TrmB family. In terms of assembly, monomer.

The catalysed reaction is guanosine(46) in tRNA + S-adenosyl-L-methionine = N(7)-methylguanosine(46) in tRNA + S-adenosyl-L-homocysteine. It functions in the pathway tRNA modification; N(7)-methylguanine-tRNA biosynthesis. Catalyzes the formation of N(7)-methylguanine at position 46 (m7G46) in tRNA. This is tRNA (guanine-N(7)-)-methyltransferase from Edwardsiella ictaluri (strain 93-146).